We begin with the raw amino-acid sequence, 74 residues long: Translation initiation factor IF-1 (74 aa).

Residues 1 to 72 (MAKQDAIEME…TKGRITYRLR (72 aa)) form the S1-like domain.

This sequence belongs to the IF-1 family. Component of the 30S ribosomal translation pre-initiation complex which assembles on the 30S ribosome in the order IF-2 and IF-3, IF-1 and N-formylmethionyl-tRNA(fMet); mRNA recruitment can occur at any time during PIC assembly.

It localises to the cytoplasm. One of the essential components for the initiation of protein synthesis. Stabilizes the binding of IF-2 and IF-3 on the 30S subunit to which N-formylmethionyl-tRNA(fMet) subsequently binds. Helps modulate mRNA selection, yielding the 30S pre-initiation complex (PIC). Upon addition of the 50S ribosomal subunit IF-1, IF-2 and IF-3 are released leaving the mature 70S translation initiation complex. The sequence is that of Translation initiation factor IF-1 from Acaryochloris marina (strain MBIC 11017).